Here is a 579-residue protein sequence, read N- to C-terminus: Putative fatty-acid--CoA ligase fadD21 (579 aa).

The protein belongs to the ATP-dependent AMP-binding enzyme family.

In Mycobacterium leprae (strain TN), this protein is Putative fatty-acid--CoA ligase fadD21 (fadD21).